The sequence spans 240 residues: Carboxy-S-adenosyl-L-methionine synthase (240 aa).

Residues Y35, 61–63 (GCS), 86–87 (DN), 112–113 (DI), and R194 contribute to the S-adenosyl-L-methionine site.

The protein belongs to the class I-like SAM-binding methyltransferase superfamily. Cx-SAM synthase family. In terms of assembly, homodimer.

It catalyses the reaction prephenate + S-adenosyl-L-methionine = carboxy-S-adenosyl-L-methionine + 3-phenylpyruvate + H2O. Its function is as follows. Catalyzes the conversion of S-adenosyl-L-methionine (SAM) to carboxy-S-adenosyl-L-methionine (Cx-SAM). This is Carboxy-S-adenosyl-L-methionine synthase from Wolinella succinogenes (strain ATCC 29543 / DSM 1740 / CCUG 13145 / JCM 31913 / LMG 7466 / NCTC 11488 / FDC 602W) (Vibrio succinogenes).